The following is a 462-amino-acid chain: Cysteine--tRNA ligase (462 aa).

Cys30 provides a ligand contact to Zn(2+). Positions Met32 to His42 match the 'HIGH' region motif. Zn(2+) is bound by residues Cys214, His239, and Glu243. The 'KMSKS' region signature appears at Lys271–Ser275. Lys274 contributes to the ATP binding site.

Belongs to the class-I aminoacyl-tRNA synthetase family. In terms of assembly, monomer. The cofactor is Zn(2+).

It localises to the cytoplasm. The catalysed reaction is tRNA(Cys) + L-cysteine + ATP = L-cysteinyl-tRNA(Cys) + AMP + diphosphate. The protein is Cysteine--tRNA ligase of Cupriavidus pinatubonensis (strain JMP 134 / LMG 1197) (Cupriavidus necator (strain JMP 134)).